Consider the following 300-residue polypeptide: uncharacterized protein (300 aa).

Over residues methionine 1 to alanine 19 the composition is skewed to basic and acidic residues. Residues methionine 1–glutamine 20 form a disordered region.

This is an uncharacterized protein from Orgyia pseudotsugata multicapsid polyhedrosis virus (OpMNPV).